Here is a 556-residue protein sequence, read N- to C-terminus: Phenylalanine--tRNA ligase beta subunit (556 aa).

A B5 domain is found at 278 to 353 (LTPKRFEVEL…IAYGYNNIEP (76 aa)). Mg(2+) contacts are provided by aspartate 331, aspartate 337, glutamate 340, and aspartate 341.

This sequence belongs to the phenylalanyl-tRNA synthetase beta subunit family. Type 2 subfamily. Tetramer of two alpha and two beta subunits. Mg(2+) is required as a cofactor.

The protein localises to the cytoplasm. The catalysed reaction is tRNA(Phe) + L-phenylalanine + ATP = L-phenylalanyl-tRNA(Phe) + AMP + diphosphate + H(+). This is Phenylalanine--tRNA ligase beta subunit from Pyrococcus abyssi (strain GE5 / Orsay).